The sequence spans 412 residues: Serine hydroxymethyltransferase (412 aa).

(6S)-5,6,7,8-tetrahydrofolate contacts are provided by residues Leu-117 and 121–123; that span reads GHL. Lys-226 carries the N6-(pyridoxal phosphate)lysine modification. (6S)-5,6,7,8-tetrahydrofolate is bound at residue 349 to 351; sequence SPF.

The protein belongs to the SHMT family. In terms of assembly, homodimer. Requires pyridoxal 5'-phosphate as cofactor.

The protein resides in the cytoplasm. The catalysed reaction is (6R)-5,10-methylene-5,6,7,8-tetrahydrofolate + glycine + H2O = (6S)-5,6,7,8-tetrahydrofolate + L-serine. It functions in the pathway one-carbon metabolism; tetrahydrofolate interconversion. Its pathway is amino-acid biosynthesis; glycine biosynthesis; glycine from L-serine: step 1/1. Catalyzes the reversible interconversion of serine and glycine with tetrahydrofolate (THF) serving as the one-carbon carrier. This reaction serves as the major source of one-carbon groups required for the biosynthesis of purines, thymidylate, methionine, and other important biomolecules. Also exhibits THF-independent aldolase activity toward beta-hydroxyamino acids, producing glycine and aldehydes, via a retro-aldol mechanism. The chain is Serine hydroxymethyltransferase from Geobacillus thermodenitrificans (strain NG80-2).